A 239-amino-acid chain; its full sequence is Ubiquinone biosynthesis O-methyltransferase (239 aa).

The S-adenosyl-L-methionine site is built by R44, G63, D84, and M128.

This sequence belongs to the methyltransferase superfamily. UbiG/COQ3 family.

The enzyme catalyses a 3-demethylubiquinol + S-adenosyl-L-methionine = a ubiquinol + S-adenosyl-L-homocysteine + H(+). It catalyses the reaction a 3-(all-trans-polyprenyl)benzene-1,2-diol + S-adenosyl-L-methionine = a 2-methoxy-6-(all-trans-polyprenyl)phenol + S-adenosyl-L-homocysteine + H(+). It functions in the pathway cofactor biosynthesis; ubiquinone biosynthesis. O-methyltransferase that catalyzes the 2 O-methylation steps in the ubiquinone biosynthetic pathway. The sequence is that of Ubiquinone biosynthesis O-methyltransferase from Xanthomonas euvesicatoria pv. vesicatoria (strain 85-10) (Xanthomonas campestris pv. vesicatoria).